Here is a 210-residue protein sequence, read N- to C-terminus: Large ribosomal subunit protein uL3 (210 aa).

Positions 120 to 143 are disordered; it reads FQGNIKKDGQSRGPMGHGSRYHRR.

It belongs to the universal ribosomal protein uL3 family. Part of the 50S ribosomal subunit. Forms a cluster with proteins L14 and L19.

Functionally, one of the primary rRNA binding proteins, it binds directly near the 3'-end of the 23S rRNA, where it nucleates assembly of the 50S subunit. This chain is Large ribosomal subunit protein uL3, found in Latilactobacillus sakei subsp. sakei (strain 23K) (Lactobacillus sakei subsp. sakei).